We begin with the raw amino-acid sequence, 74 residues long: uncharacterized protein (74 aa).

Disordered regions lie at residues 1–26 and 46–74; these read MNGP…SGVF and ITNS…SFTQ. Residues 34 to 50 traverse the membrane as a helical segment; sequence VSNKSIMLISLKITNSP. Residues 47 to 74 show a composition bias toward low complexity; it reads TNSPNSNSRGSSSSSSTSKSSSKTSFTQ.

It localises to the membrane. This is an uncharacterized protein from Dictyostelium discoideum (Social amoeba).